Here is a 688-residue protein sequence, read N- to C-terminus: MSSRALTWPRTAKSSLLKQQTSSFVGQPKLGTPNCRSFSSTADRPINQSAEFSSSSKSYDRLGRRAKEKLLDREFFLSLLNSASTKREAKSYLARLKAQHPPKAQTEPTTGHSKGTVTQSLPSGVNLGSFYGASRSVYDSPVFRHDSTPLPPPSELPEERLHLALIKIRTPQLLDDTIINGVAKTLSQLSRLGMACCVVVDPGTAGNANTLRRVAAEQAERISIAVDAQPDSKSAHLDSVLSLSPMFPELPTVLSRKALLNPLRDGQIVVVAPIAYTEDVPKAVTISANDAILALTKELAGLAMRPDPDEDPWLTAQKIAKLQKEVSLDRVILLDPLGGIPSFRGPQTSHVFINMEQEFDDIKNELLHVQSSEACTATTPKGGNTFVEDPLERHLDNLQLSQNVLAMLPSASSGIITSPLEVSNSARTPQANPSDVSAVGTRRQRNPLIHNLLTDKPLLSSSLPMSRREAMNRRRGSINTPSSHTTFVKRGMPLTMIPNPRVEVWTAQNRPRLSLDDPSIDLPRLVQLIEDSFNRKLDVQDYLNRVNDRLAGLIIAGEYEGGAILTWELPPGVEDDGSPASEARMVPYLDKFAVLKRSQGAGGVADIVFNAMVRSCFPNGVCWRSRKDNPVNKWYFERSTGTWKLSDTNWTMFWTTPGLTENSQRFSDYEQVCRSIQPSWADDTGVVD.

The N-terminal 45 residues, 1–45 (MSSRALTWPRTAKSSLLKQQTSSFVGQPKLGTPNCRSFSSTADRP), are a transit peptide targeting the mitochondrion. 2 disordered regions span residues 1-59 (MSSR…SKSY) and 96-119 (LKAQ…TVTQ). Composition is skewed to polar residues over residues 12–25 (AKSS…SSFV), 34–57 (NCRS…SSSK), and 106–119 (TEPT…TVTQ). In terms of domain architecture, N-acetyltransferase spans 509–678 (NRPRLSLDDP…YEQVCRSIQP (170 aa)).

Belongs to the acetyltransferase family.

It localises to the mitochondrion. It catalyses the reaction L-glutamate + acetyl-CoA = N-acetyl-L-glutamate + CoA + H(+). It participates in amino-acid biosynthesis; L-arginine biosynthesis; N(2)-acetyl-L-ornithine from L-glutamate: step 1/4. N-acetylglutamate synthase involved in arginine biosynthesis. The polypeptide is Amino-acid acetyltransferase, mitochondrial (arg2) (Aspergillus flavus (strain ATCC 200026 / FGSC A1120 / IAM 13836 / NRRL 3357 / JCM 12722 / SRRC 167)).